We begin with the raw amino-acid sequence, 978 residues long: Serine/threonine-protein kinase PLK4 (978 aa).

A Protein kinase domain is found at Phe-13 to Ile-266. ATP contacts are provided by residues Leu-19–Val-27 and Lys-42. Asp-137 functions as the Proton acceptor in the catalytic mechanism. Polar residues-rich tracts occupy residues Leu-271–His-282 and Ser-291–Thr-304. 4 disordered regions span residues Leu-271 to Ser-381, Ile-489 to Leu-578, Ala-788 to Ser-818, and Ala-838 to Pro-869. The segment covering Arg-324–His-335 has biased composition (basic and acidic residues). Composition is skewed to polar residues over residues Thr-351–Val-362 and Ala-371–Ser-381. 2 stretches are compositionally biased toward basic and acidic residues: residues Gly-518 to Asp-527 and Glu-536 to Leu-566. In terms of domain architecture, Cryptic POLO box 1 (CPB1) spans Ser-565 to Leu-678. In terms of domain architecture, Cryptic POLO box 2 (CPB2) spans Thr-679–Ser-792. The span at Gln-801–Ser-818 shows a compositional bias: polar residues. Residues Lys-848–Gln-862 are compositionally biased toward basic residues. One can recognise a POLO box domain in the interval His-895 to Thr-973.

This sequence belongs to the protein kinase superfamily. Ser/Thr protein kinase family. CDC5/Polo subfamily. In terms of assembly, homodimer. In terms of processing, ubiquitinated; leading to its degradation by the proteasome.

Its subcellular location is the cytoplasm. It localises to the cytoskeleton. The protein localises to the microtubule organizing center. It is found in the centrosome. The protein resides in the centriole. It catalyses the reaction L-seryl-[protein] + ATP = O-phospho-L-seryl-[protein] + ADP + H(+). The catalysed reaction is L-threonyl-[protein] + ATP = O-phospho-L-threonyl-[protein] + ADP + H(+). Serine/threonine-protein kinase that plays a central role in centriole duplication. Able to trigger procentriole formation on the surface of the mother centriole cylinder, leading to the recruitment of centriole biogenesis proteins. When overexpressed, it is able to induce centrosome amplification through the simultaneous generation of multiple procentrioles adjoining each parental centriole during S phase. The protein is Serine/threonine-protein kinase PLK4 of Nematostella vectensis (Starlet sea anemone).